The following is a 396-amino-acid chain: Ribosomal RNA large subunit methyltransferase I (396 aa).

The PUA domain occupies 2 to 81 (TVRLILAKGR…ESIDIDFFVR (80 aa)).

This sequence belongs to the methyltransferase superfamily. RlmI family.

The protein localises to the cytoplasm. The enzyme catalyses cytidine(1962) in 23S rRNA + S-adenosyl-L-methionine = 5-methylcytidine(1962) in 23S rRNA + S-adenosyl-L-homocysteine + H(+). Functionally, specifically methylates the cytosine at position 1962 (m5C1962) of 23S rRNA. The protein is Ribosomal RNA large subunit methyltransferase I of Erwinia tasmaniensis (strain DSM 17950 / CFBP 7177 / CIP 109463 / NCPPB 4357 / Et1/99).